A 224-amino-acid chain; its full sequence is MSIKHWPEQERPREKLIQQGAGALSDSELLAIFLRTGTQGISAVELARQLLAQFGGLRSLMSASREEFCQGLGLGDAKYTQLQAVLEMSKRHLQEQLMRETVFASAEHVRTYLSSQLRHSPREVFAVLFLDTQHRLIRYQELFMGTIDAAAVYPREVVKAALQYNAAAVILAHNHPSGIAEPSQADISITDKIKRALDLVDVRLLDHFVVGDGLPVSLAERGLV.

The MPN domain occupies 102-224; the sequence is VFASAEHVRT…PVSLAERGLV (123 aa). Residues His-173, His-175, and Asp-186 each contribute to the Zn(2+) site. A JAMM motif motif is present at residues 173–186; sequence HNHPSGIAEPSQAD.

It belongs to the UPF0758 family.

This Marinomonas sp. (strain MWYL1) protein is UPF0758 protein Mmwyl1_0624.